Consider the following 401-residue polypeptide: Canavanine gamma-lyase (401 aa).

K214 carries the N6-(pyridoxal phosphate)lysine modification.

Belongs to the trans-sulfuration enzymes family. Requires pyridoxal 5'-phosphate as cofactor.

It carries out the reaction L-canavanine + H2O = N-hydroxyguanidine + L-homoserine. Its function is as follows. Lyase involved in the degradation of canavanine, the delta-oxa-analog of arginine, allowing growth on canavanine as sole nitrogen and carbon source. Catalyzes the elimination of hydroxyguanidine from canavanine with a subsequent water addition to yield homoserine. The chain is Canavanine gamma-lyase from Rhizobium leguminosarum bv. trifolii (strain WSM2304).